The following is a 914-amino-acid chain: Alanine--tRNA ligase (914 aa).

Positions 608, 612, 711, and 715 each coordinate Zn(2+).

The protein belongs to the class-II aminoacyl-tRNA synthetase family. Zn(2+) serves as cofactor.

The protein localises to the cytoplasm. It carries out the reaction tRNA(Ala) + L-alanine + ATP = L-alanyl-tRNA(Ala) + AMP + diphosphate. In terms of biological role, catalyzes the attachment of alanine to tRNA(Ala) in a two-step reaction: alanine is first activated by ATP to form Ala-AMP and then transferred to the acceptor end of tRNA(Ala). Also edits incorrectly charged Ser-tRNA(Ala) and Gly-tRNA(Ala) via its editing domain. The polypeptide is Alanine--tRNA ligase (Methanoregula boonei (strain DSM 21154 / JCM 14090 / 6A8)).